The chain runs to 668 residues: Kelch repeat-containing protein ARB_01230 (668 aa).

A signal peptide spans 1–32 (MEVGRFASKSASMTYLLLVLLVGFILPQQGQH). Residues 33-522 (AHARTLARRD…GSGSDGPNIA (490 aa)) lie on the Extracellular side of the membrane. A glycan (N-linked (GlcNAc...) asparagine) is linked at Asn-60. 2 Kelch repeats span residues 62-108 (TLYI…PRGD) and 125-176 (SLFL…ANIP). N-linked (GlcNAc...) asparagine glycosylation is found at Asn-251 and Asn-291. 4 Kelch repeats span residues 283–331 (ILGL…AVAA), 340–395 (QVYL…IWNS), 396–445 (QIVV…ASQT), and 463–509 (VQSV…GPHA). Residues 523 to 543 (AIVAGVIAGCLGVLAIYLGFV) form a helical membrane-spanning segment. Residues 544–668 (TWLYRRRLAI…PRQTLRVINQ (125 aa)) lie on the Cytoplasmic side of the membrane. The segment at 611 to 642 (DNQRHNHTRSSSGGNFDHLAQPERPSTSSSVE) is disordered.

The protein localises to the membrane. Its subcellular location is the secreted. The chain is Kelch repeat-containing protein ARB_01230 from Arthroderma benhamiae (strain ATCC MYA-4681 / CBS 112371) (Trichophyton mentagrophytes).